Reading from the N-terminus, the 200-residue chain is uncharacterized protein (200 aa).

Low complexity-rich tracts occupy residues 1 to 13 and 28 to 44; these read MTSAETASRAAES and PSPAAPSRPGAPAAGPR. Disordered stretches follow at residues 1-116 and 137-200; these read MTSA…GGPG and LPRD…SSFF. A compositionally biased stretch (basic residues) spans 88–102; the sequence is RCGRPRRRDPRRRRT. A compositionally biased stretch (low complexity) spans 189-200; the sequence is PSSSSGLLSSFF.

This is an uncharacterized protein from Homo sapiens (Human).